The sequence spans 271 residues: Probable short-chain type dehydrogenase/reductase VdlC (271 aa).

1 to 25 serves as a coordination point for NAD(+); sequence MAVITGASSGIGLECVLMLLNQGYK. Ser129 serves as a coordination point for substrate. Catalysis depends on Tyr142, which acts as the Proton acceptor.

It belongs to the short-chain dehydrogenases/reductases (SDR) family.

In Helicobacter pylori (strain J99 / ATCC 700824) (Campylobacter pylori J99), this protein is Probable short-chain type dehydrogenase/reductase VdlC (vdlC).